We begin with the raw amino-acid sequence, 606 residues long: Elongation factor 4 (606 aa).

The region spanning 7–189 (SRIRNFCIIA…AVVDRVPPPK (183 aa)) is the tr-type G domain. GTP-binding positions include 19–24 (DHGKST) and 136–139 (NKID).

Belongs to the TRAFAC class translation factor GTPase superfamily. Classic translation factor GTPase family. LepA subfamily.

It localises to the cell inner membrane. It catalyses the reaction GTP + H2O = GDP + phosphate + H(+). Functionally, required for accurate and efficient protein synthesis under certain stress conditions. May act as a fidelity factor of the translation reaction, by catalyzing a one-codon backward translocation of tRNAs on improperly translocated ribosomes. Back-translocation proceeds from a post-translocation (POST) complex to a pre-translocation (PRE) complex, thus giving elongation factor G a second chance to translocate the tRNAs correctly. Binds to ribosomes in a GTP-dependent manner. This is Elongation factor 4 from Synechococcus sp. (strain CC9605).